Consider the following 439-residue polypeptide: Ribosomal protein uS12 methylthiotransferase RimO (439 aa).

The MTTase N-terminal domain maps to 7-119 (KQLCLISLGC…IDIMIAKKQN (113 aa)). [4Fe-4S] cluster contacts are provided by cysteine 16, cysteine 50, cysteine 82, cysteine 151, cysteine 155, and cysteine 158. Positions 137–365 (TGSSVHAYVK…NKIALKHQNN (229 aa)) constitute a Radical SAM core domain.

Belongs to the methylthiotransferase family. RimO subfamily. It depends on [4Fe-4S] cluster as a cofactor.

The protein localises to the cytoplasm. The enzyme catalyses L-aspartate(89)-[ribosomal protein uS12]-hydrogen + (sulfur carrier)-SH + AH2 + 2 S-adenosyl-L-methionine = 3-methylsulfanyl-L-aspartate(89)-[ribosomal protein uS12]-hydrogen + (sulfur carrier)-H + 5'-deoxyadenosine + L-methionine + A + S-adenosyl-L-homocysteine + 2 H(+). Functionally, catalyzes the methylthiolation of an aspartic acid residue of ribosomal protein uS12. This chain is Ribosomal protein uS12 methylthiotransferase RimO, found in Helicobacter pylori (strain Shi470).